The primary structure comprises 383 residues: Probable arabinan endo-1,5-alpha-L-arabinosidase D (383 aa).

The N-terminal stretch at Met1–Ala22 is a signal peptide. Asp49 acts as the Proton acceptor in catalysis. N-linked (GlcNAc...) asparagine glycans are attached at residues Asn75, Asn163, and Asn206. The Proton donor role is filled by Glu227. Asn325 carries an N-linked (GlcNAc...) asparagine glycan. A lipid anchor (GPI-anchor amidated asparagine) is attached at Asn356. Positions Pro357 to Leu383 are cleaved as a propeptide — removed in mature form.

It belongs to the glycosyl hydrolase 43 family.

It localises to the cell membrane. The enzyme catalyses Endohydrolysis of (1-&gt;5)-alpha-arabinofuranosidic linkages in (1-&gt;5)-arabinans.. It functions in the pathway glycan metabolism; L-arabinan degradation. Endo-1,5-alpha-L-arabinanase involved in degradation of pectin. Its preferred substrate is linear 1,5-alpha-L-arabinan. The polypeptide is Probable arabinan endo-1,5-alpha-L-arabinosidase D (abnD) (Emericella nidulans (strain FGSC A4 / ATCC 38163 / CBS 112.46 / NRRL 194 / M139) (Aspergillus nidulans)).